The following is a 385-amino-acid chain: METFDYYEILEITRTSDKETIKKAYRKMALKYHPDRNPDDKDAEEQFKRVNEAYEVLSDDSKRQIYDKYGKEGLQNSGFSGFSGRDFSDIFGDLGSIFESAFGANFGFSTQKRGGGKYNLDEIVGLELSFTEAVFGCKKEIHNSFKIACSDCKGTGAKGGKLNTCKDCGGKGQVYMRQGFMTFAQTCPTCKGEGQSASEKCSKCKGSGFEISEESFEVSIPEGIDDGNRIRIGGRGNADKNGSRGDLYIAVSVAEDENFVRDGENVYIEVPVFFTSIVLGTTLKIPSLRGELELKIPPNTRDKEQFVFDNEGIKDVNSAYRGKFVAQIKITYPPKLNAEQRALTEKLQESFGIESEPYKNVFEECFTKVKQWLHKHSKNDKDTTK.

Residues 5-70 (DYYEILEITR…SKRQIYDKYG (66 aa)) form the J domain. A CR-type zinc finger spans residues 136–213 (GCKKEIHNSF…CKGSGFEISE (78 aa)). 8 residues coordinate Zn(2+): cysteine 149, cysteine 152, cysteine 165, cysteine 168, cysteine 187, cysteine 190, cysteine 201, and cysteine 204. CXXCXGXG motif repeat units follow at residues 149 to 156 (CSDCKGTG), 165 to 172 (CKDCGGKG), 187 to 194 (CPTCKGEG), and 201 to 208 (CSKCKGSG).

It belongs to the DnaJ family. In terms of assembly, homodimer. Zn(2+) serves as cofactor.

Its subcellular location is the cytoplasm. Participates actively in the response to hyperosmotic and heat shock by preventing the aggregation of stress-denatured proteins and by disaggregating proteins, also in an autonomous, DnaK-independent fashion. Unfolded proteins bind initially to DnaJ; upon interaction with the DnaJ-bound protein, DnaK hydrolyzes its bound ATP, resulting in the formation of a stable complex. GrpE releases ADP from DnaK; ATP binding to DnaK triggers the release of the substrate protein, thus completing the reaction cycle. Several rounds of ATP-dependent interactions between DnaJ, DnaK and GrpE are required for fully efficient folding. Also involved, together with DnaK and GrpE, in the DNA replication of plasmids through activation of initiation proteins. The protein is Chaperone protein DnaJ of Helicobacter hepaticus (strain ATCC 51449 / 3B1).